A 269-amino-acid polypeptide reads, in one-letter code: UPF0162 protein BUsg_167 (269 aa).

Belongs to the UPF0162 family.

This chain is UPF0162 protein BUsg_167, found in Buchnera aphidicola subsp. Schizaphis graminum (strain Sg).